The following is an 823-amino-acid chain: Protein ROOT HAIR DEFECTIVE 3 homolog 2 (823 aa).

The Cytoplasmic segment spans residues 1–688; it reads MEVPISGGGG…EAHRRSNNWL (688 aa). In terms of domain architecture, GB1/RHD3-type G spans 45–260; the sequence is GLSYAVVSIV…IAPGGLAADR (216 aa). GTP is bound at residue 55-62; sequence GPQGSGKS. Residues 226-246 are a coiled coil; that stretch reads LSSYEEKENLFKEQVGQLRQR. The helical transmembrane segment at 689-709 threads the bilayer; the sequence is PPAWTVLLLAILGYNEFIFLL. Topologically, residues 710–712 are lumenal; it reads RNP. Residues 713-733 form a helical membrane-spanning segment; that stretch reads LYLLGLFVAFVVSYAAWLQYD. The Cytoplasmic segment spans residues 734–823; sequence ITAYFRHGTL…SVGSNSDDES (90 aa). Residues 770–823 form a disordered region; that stretch reads NQKSSSHPPRHRPPLHPQSFRNQAQQQSQAQVQYQAPSSLSSSSSVGSNSDDES. The span at 786–823 shows a compositional bias: low complexity; that stretch reads PQSFRNQAQQQSQAQVQYQAPSSLSSSSSVGSNSDDES.

Belongs to the TRAFAC class dynamin-like GTPase superfamily. GB1/RHD3 GTPase family. RHD3 subfamily.

Its subcellular location is the endoplasmic reticulum membrane. Functionally, probable GTP-binding protein that may be involved in cell development. The protein is Protein ROOT HAIR DEFECTIVE 3 homolog 2 of Oryza sativa subsp. japonica (Rice).